Reading from the N-terminus, the 483-residue chain is tRNA-2-methylthio-N(6)-dimethylallyladenosine synthase (483 aa).

In terms of domain architecture, MTTase N-terminal spans 31-148 (KKLYIETQGC…LPQMLDQHHA (118 aa)). Positions 40, 77, 111, 192, 196, and 199 each coordinate [4Fe-4S] cluster. Residues 178 to 410 (RVEGFKAFVS…QQVIKQSSIE (233 aa)) enclose the Radical SAM core domain. Residues 413 to 477 (DAMLGKIERV…LNLVYGELLN (65 aa)) enclose the TRAM domain.

This sequence belongs to the methylthiotransferase family. MiaB subfamily. As to quaternary structure, monomer. [4Fe-4S] cluster is required as a cofactor.

It localises to the cytoplasm. It carries out the reaction N(6)-dimethylallyladenosine(37) in tRNA + (sulfur carrier)-SH + AH2 + 2 S-adenosyl-L-methionine = 2-methylsulfanyl-N(6)-dimethylallyladenosine(37) in tRNA + (sulfur carrier)-H + 5'-deoxyadenosine + L-methionine + A + S-adenosyl-L-homocysteine + 2 H(+). Catalyzes the methylthiolation of N6-(dimethylallyl)adenosine (i(6)A), leading to the formation of 2-methylthio-N6-(dimethylallyl)adenosine (ms(2)i(6)A) at position 37 in tRNAs that read codons beginning with uridine. This is tRNA-2-methylthio-N(6)-dimethylallyladenosine synthase from Acinetobacter baumannii (strain AB0057).